Consider the following 84-residue polypeptide: METLLSFSAIAVGIIVGLASLGTAIGFALLGGKFLEGAARQPEMAPMLQVKMFIIAGLLDAVPMIGIVIALLFTFANPFVGQLG.

2 helical membrane-spanning segments follow: residues 10 to 30 and 53 to 73; these read IAVGIIVGLASLGTAIGFALL and FIIAGLLDAVPMIGIVIALLF.

The protein belongs to the ATPase C chain family. F-type ATPases have 2 components, F(1) - the catalytic core - and F(0) - the membrane proton channel. F(1) has five subunits: alpha(3), beta(3), gamma(1), delta(1), epsilon(1). F(0) has three main subunits: a(1), b(2) and c(10-14). The alpha and beta chains form an alternating ring which encloses part of the gamma chain. F(1) is attached to F(0) by a central stalk formed by the gamma and epsilon chains, while a peripheral stalk is formed by the delta and b chains.

It is found in the cell inner membrane. F(1)F(0) ATP synthase produces ATP from ADP in the presence of a proton or sodium gradient. F-type ATPases consist of two structural domains, F(1) containing the extramembraneous catalytic core and F(0) containing the membrane proton channel, linked together by a central stalk and a peripheral stalk. During catalysis, ATP synthesis in the catalytic domain of F(1) is coupled via a rotary mechanism of the central stalk subunits to proton translocation. In terms of biological role, key component of the F(0) channel; it plays a direct role in translocation across the membrane. A homomeric c-ring of between 10-14 subunits forms the central stalk rotor element with the F(1) delta and epsilon subunits. The sequence is that of ATP synthase subunit c from Vibrio alginolyticus.